We begin with the raw amino-acid sequence, 210 residues long: Pyridoxine/pyridoxamine 5'-phosphate oxidase (210 aa).

Substrate-binding positions include Arg-7–Tyr-10 and Lys-65. Residues Arg-60–Lys-65, Phe-75–Thr-76, Arg-81, Lys-82, and Gln-104 each bind FMN. Substrate is bound by residues Tyr-122, Arg-126, and Ser-130. Residues Gln-139–Ser-140 and Trp-182 each bind FMN. Arg-188–His-190 lines the substrate pocket. Arg-192 contacts FMN.

Belongs to the pyridoxamine 5'-phosphate oxidase family. Homodimer. FMN is required as a cofactor.

The enzyme catalyses pyridoxamine 5'-phosphate + O2 + H2O = pyridoxal 5'-phosphate + H2O2 + NH4(+). The catalysed reaction is pyridoxine 5'-phosphate + O2 = pyridoxal 5'-phosphate + H2O2. It functions in the pathway cofactor metabolism; pyridoxal 5'-phosphate salvage; pyridoxal 5'-phosphate from pyridoxamine 5'-phosphate: step 1/1. Its pathway is cofactor metabolism; pyridoxal 5'-phosphate salvage; pyridoxal 5'-phosphate from pyridoxine 5'-phosphate: step 1/1. In terms of biological role, catalyzes the oxidation of either pyridoxine 5'-phosphate (PNP) or pyridoxamine 5'-phosphate (PMP) into pyridoxal 5'-phosphate (PLP). The sequence is that of Pyridoxine/pyridoxamine 5'-phosphate oxidase from Bordetella bronchiseptica (strain ATCC BAA-588 / NCTC 13252 / RB50) (Alcaligenes bronchisepticus).